Consider the following 337-residue polypeptide: MVVKVGINGFGRIGRIVFRNAVEHPEVEIVAVNDPFIETHYAAYMLKYDSTHGRFKGDVKFSENGLDVDGKHVRFYQERDPANIPWAETGADYVIESTGVFTTTEKASAHLKGGAKKVIISAPSADAPMFVMGVNNETYKSDIKVLSNASCTTNCLAPLAKVVNDNFGLVEGLMTTVHSYTATQKTVDGPSSKDWRGGRTAAQNIIPSSTGAAKAVGKVIPSLNGKLTGMSMRVPTSNVSVVDLTCRTDKSVTYDQIKEAMKKASANELKGIMSYSEDALVSSDLNGDPHSCIFDATAGIALNDHFIKLVAWYDNEWGYSRRVIDLIAYIAGVDAGK.

Residues 12–13 (RI), Asp34, and Arg79 each bind NAD(+). Residues 150-152 (SCT), Thr181, 210-211 (TG), and Arg233 contribute to the D-glyceraldehyde 3-phosphate site. Cys151 serves as the catalytic Nucleophile. Asn315 lines the NAD(+) pocket.

The protein belongs to the glyceraldehyde-3-phosphate dehydrogenase family. In terms of assembly, homotetramer.

It localises to the cytoplasm. It carries out the reaction D-glyceraldehyde 3-phosphate + phosphate + NAD(+) = (2R)-3-phospho-glyceroyl phosphate + NADH + H(+). It participates in carbohydrate degradation; glycolysis; pyruvate from D-glyceraldehyde 3-phosphate: step 1/5. The protein is Glyceraldehyde-3-phosphate dehydrogenase (GPD) of Coccidioides posadasii (strain C735) (Valley fever fungus).